The primary structure comprises 228 residues: Orotate phosphoribosyltransferase (228 aa).

Residues Arg-107, Lys-108, Lys-111, and 133–141 (EDLTTDGGS) each bind 5-phospho-alpha-D-ribose 1-diphosphate. Orotate is bound at residue Thr-137.

Belongs to the purine/pyrimidine phosphoribosyltransferase family. PyrE subfamily. In terms of assembly, homodimer. Mg(2+) is required as a cofactor.

The catalysed reaction is orotidine 5'-phosphate + diphosphate = orotate + 5-phospho-alpha-D-ribose 1-diphosphate. The protein operates within pyrimidine metabolism; UMP biosynthesis via de novo pathway; UMP from orotate: step 1/2. In terms of biological role, catalyzes the transfer of a ribosyl phosphate group from 5-phosphoribose 1-diphosphate to orotate, leading to the formation of orotidine monophosphate (OMP). The sequence is that of Orotate phosphoribosyltransferase from Jannaschia sp. (strain CCS1).